Here is a 373-residue protein sequence, read N- to C-terminus: STE20-related kinase adapter protein alpha (373 aa).

Residues 11-321 (YELLTVIGKG…ASTLLNHSFF (311 aa)) form the Protein kinase domain. The span at 255 to 281 (STSRSAANSGLSESLAPSTPRTSNGDS) shows a compositional bias: polar residues. Residues 255-288 (STSRSAANSGLSESLAPSTPRTSNGDSPSHPYHR) are disordered. T361 carries the post-translational modification Phosphothreonine; by LKB1.

The protein belongs to the protein kinase superfamily. STE Ser/Thr protein kinase family. STE20 subfamily. In terms of assembly, component of a trimeric complex composed of STK11/LKB1, STRAD (STRADA or STRADB) and CAB39/MO25 (CAB39/MO25alpha or CAB39L/MO25beta): the complex tethers STK11/LKB1 in the cytoplasm and stimulates its catalytic activity.

It is found in the nucleus. It localises to the cytoplasm. In terms of biological role, pseudokinase which, in complex with CAB39/MO25 (CAB39/MO25alpha or CAB39L/MO25beta), binds to and activates STK11/LKB1. Adopts a closed conformation typical of active protein kinases and binds STK11/LKB1 as a pseudosubstrate, promoting conformational change of STK11/LKB1 in an active conformation. The chain is STE20-related kinase adapter protein alpha (STRADA) from Bos taurus (Bovine).